The primary structure comprises 399 residues: Phosphomevalonate dehydratase large subunit (399 aa).

Gly54, Val55, Ser56, Asn85, and Pro86 together coordinate (R)-5-phosphomevalonate. Residue Cys125 coordinates [4Fe-4S] cluster. Glu144 and Ser145 together coordinate (R)-5-phosphomevalonate. The [4Fe-4S] cluster site is built by Cys298 and Cys355. Position 375 (Lys375) interacts with (R)-5-phosphomevalonate.

It belongs to the AcnX type II large subunit family. Heterodimer composed of a large subunit (PMDh-L) and a small subunit (PMDh-S). It depends on [4Fe-4S] cluster as a cofactor.

The enzyme catalyses (R)-5-phosphomevalonate = (2E)-3-methyl-5-phosphooxypent-2-enoate + H2O. The protein operates within isoprenoid biosynthesis; isopentenyl diphosphate biosynthesis via mevalonate pathway. In terms of biological role, component of a hydro-lyase that catalyzes the dehydration of mevalonate 5-phosphate (MVA5P) to form trans-anhydromevalonate 5-phosphate (tAHMP). Involved in the archaeal mevalonate (MVA) pathway, which provides fundamental precursors for isoprenoid biosynthesis, such as isopentenyl diphosphate (IPP) and dimethylallyl diphosphate (DMAPP). The polypeptide is Phosphomevalonate dehydratase large subunit (Methanothermobacter thermautotrophicus (strain ATCC 29096 / DSM 1053 / JCM 10044 / NBRC 100330 / Delta H) (Methanobacterium thermoautotrophicum)).